We begin with the raw amino-acid sequence, 374 residues long: Mitochondrial inner membrane protein oxa1-1 (374 aa).

A helical membrane pass occupies residues 77 to 97; it reads TINVYAGAPWWVSIILTTLGV. Over 98–159 the chain is Mitochondrial intermembrane; sequence RLALTPVMIA…GIYLKHNVNP (62 aa). The chain crosses the membrane as a helical span at residues 160-180; the sequence is FAIFILPLTQSAVFFSFFYAI. At 181–242 the chain is on the mitochondrial matrix side; it reads RKMSRLSVDG…TIGNSTNWRT (62 aa). Residues 243-263 traverse the membrane as a helical segment; the sequence is FFFLCCLLSPLLTAKLPAAIF. Topologically, residues 264–374 are mitochondrial intermembrane; that stretch reads MYWIPSSLFN…SKKNSKKQSN (111 aa).

The protein belongs to the OXA1/ALB3/YidC family.

The protein localises to the mitochondrion inner membrane. Its function is as follows. Required for the insertion of integral membrane proteins into the mitochondrial inner membrane. Essential for the activity and assembly of cytochrome c oxidase. Not essential for viability, while oxa102 is essential. When both genes are deleted the cell is non-viable, suggesting that oxa101 act as a back-up for oxa102. In Schizosaccharomyces pombe (strain 972 / ATCC 24843) (Fission yeast), this protein is Mitochondrial inner membrane protein oxa1-1 (oxa101).